Consider the following 294-residue polypeptide: Phosphatidylserine decarboxylase proenzyme (294 aa).

Residues Asp100, His157, and Ser261 each act as charge relay system; for autoendoproteolytic cleavage activity in the active site. Ser261 serves as the catalytic Schiff-base intermediate with substrate; via pyruvic acid; for decarboxylase activity. Position 261 is a pyruvic acid (Ser); by autocatalysis (Ser261).

Belongs to the phosphatidylserine decarboxylase family. PSD-B subfamily. Prokaryotic type I sub-subfamily. In terms of assembly, heterodimer of a large membrane-associated beta subunit and a small pyruvoyl-containing alpha subunit. Pyruvate is required as a cofactor. Is synthesized initially as an inactive proenzyme. Formation of the active enzyme involves a self-maturation process in which the active site pyruvoyl group is generated from an internal serine residue via an autocatalytic post-translational modification. Two non-identical subunits are generated from the proenzyme in this reaction, and the pyruvate is formed at the N-terminus of the alpha chain, which is derived from the carboxyl end of the proenzyme. The autoendoproteolytic cleavage occurs by a canonical serine protease mechanism, in which the side chain hydroxyl group of the serine supplies its oxygen atom to form the C-terminus of the beta chain, while the remainder of the serine residue undergoes an oxidative deamination to produce ammonia and the pyruvoyl prosthetic group on the alpha chain. During this reaction, the Ser that is part of the protease active site of the proenzyme becomes the pyruvoyl prosthetic group, which constitutes an essential element of the active site of the mature decarboxylase.

It is found in the cell membrane. It carries out the reaction a 1,2-diacyl-sn-glycero-3-phospho-L-serine + H(+) = a 1,2-diacyl-sn-glycero-3-phosphoethanolamine + CO2. It functions in the pathway phospholipid metabolism; phosphatidylethanolamine biosynthesis; phosphatidylethanolamine from CDP-diacylglycerol: step 2/2. Catalyzes the formation of phosphatidylethanolamine (PtdEtn) from phosphatidylserine (PtdSer). This is Phosphatidylserine decarboxylase proenzyme from Histophilus somni (strain 129Pt) (Haemophilus somnus).